Reading from the N-terminus, the 481-residue chain is Bifunctional protein HldE (481 aa).

A ribokinase region spans residues 1–318; it reads MKVTLPDFRR…ENAIRGRAET (318 aa). Position 195–198 (195–198) interacts with ATP; the sequence is NLSE. Residue Asp-264 is part of the active site. The tract at residues 344–481 is cytidylyltransferase; the sequence is MTNGIFDILH…KRRAGQRTVV (138 aa).

It in the N-terminal section; belongs to the carbohydrate kinase PfkB family. This sequence in the C-terminal section; belongs to the cytidylyltransferase family. Homodimer.

It catalyses the reaction D-glycero-beta-D-manno-heptose 7-phosphate + ATP = D-glycero-beta-D-manno-heptose 1,7-bisphosphate + ADP + H(+). The enzyme catalyses D-glycero-beta-D-manno-heptose 1-phosphate + ATP + H(+) = ADP-D-glycero-beta-D-manno-heptose + diphosphate. Its pathway is nucleotide-sugar biosynthesis; ADP-L-glycero-beta-D-manno-heptose biosynthesis; ADP-L-glycero-beta-D-manno-heptose from D-glycero-beta-D-manno-heptose 7-phosphate: step 1/4. It participates in nucleotide-sugar biosynthesis; ADP-L-glycero-beta-D-manno-heptose biosynthesis; ADP-L-glycero-beta-D-manno-heptose from D-glycero-beta-D-manno-heptose 7-phosphate: step 3/4. Catalyzes the phosphorylation of D-glycero-D-manno-heptose 7-phosphate at the C-1 position to selectively form D-glycero-beta-D-manno-heptose-1,7-bisphosphate. Its function is as follows. Catalyzes the ADP transfer from ATP to D-glycero-beta-D-manno-heptose 1-phosphate, yielding ADP-D-glycero-beta-D-manno-heptose. The protein is Bifunctional protein HldE of Sodalis glossinidius (strain morsitans).